A 470-amino-acid polypeptide reads, in one-letter code: Nuclear receptor subfamily 0 group B member 1 (470 aa).

3 repeat units span residues 1–67 (MAGE…YRCC), 68–133 (FCGK…YRCC), and 134–200 (FCGE…YRCC). The interval 1–253 (MAGEDHQWQG…RPVALKNPQV (253 aa)) is 4 X 67 AA tandem repeats. Short sequence motifs (LXXLL motif) lie at residues 13–17 (LYNML), 80–84 (LYSML), and 146–150 (LYSLL). Residues 201-253 (FCGEDQPQQGSTLYSMPTSTNQTPAAPEERPGAPWWDTSCGALRPVALKNPQV) form a 4; truncated repeat. The NR LBD domain occupies 205–469 (DQPQQGSTLY…DMMLEMLCTK (265 aa)). The AF-2 motif signature appears at 461–466 (MMLEML).

This sequence belongs to the nuclear hormone receptor family. NR0 subfamily. As to quaternary structure, homodimer. Interacts with NR5A1, NR5A2, NR0B2 and with COPS2. Interacts with ESRRB; represses ESRRB activity at the GATA6 promoter.

The protein resides in the nucleus. Its subcellular location is the cytoplasm. Its function is as follows. Nuclear receptor that lacks a DNA-binding domain and acts as a corepressor that inhibits the transcriptional activity of other nuclear receptors through heterodimeric interactions. Component of a cascade required for the development of the hypothalamic-pituitary-adrenal-gonadal axis. May also have a role in the development of the embryo and in the maintenance of embryonic stem cell pluripotency. The sequence is that of Nuclear receptor subfamily 0 group B member 1 (NR0B1) from Callithrix jacchus (White-tufted-ear marmoset).